Consider the following 411-residue polypeptide: Tetra-peptide repeat homeobox protein 1 (411 aa).

Residues S3–R24 constitute a DNA-binding region (homeobox). Disordered stretches follow at residues L20–L63, I88–P246, P286–A340, and L363–L411. The segment covering Q27–P55 has biased composition (low complexity). 2 stretches are compositionally biased toward pro residues: residues G95–I139 and F149–P246. The span at S295–G307 shows a compositional bias: low complexity. Positions A319–P335 are enriched in pro residues. Composition is skewed to polar residues over residues S366 to Q376 and G388 to H402.

It belongs to the paired homeobox family.

Its subcellular location is the nucleus. In terms of biological role, transcription factor expressed after fertilization required for zygotic genome activation (ZGA), a critical event in early embryonic development during which the developmental control passes from maternally provided mRNAs to the expression of the zygotic genome after fertilization. Binds and activates expression of key ZGA marker genes, such as NANOGNB, ZSCAN4, DUXB, KLF5 and DPPA3. Binds to regulatory DNA sequences containing a 5'-TAATCC-3' sequence motif. The protein is Tetra-peptide repeat homeobox protein 1 of Homo sapiens (Human).